We begin with the raw amino-acid sequence, 447 residues long: NADH-ubiquinone oxidoreductase chain 4 (447 aa).

Helical transmembrane passes span 28–48, 56–76, 85–105, 110–130, 141–161, 183–203, 213–233, 246–266, 273–293, 301–321, 343–365, 380–400, and 409–431; these read IFLATCLFMIKISSNYYFCDI, MISYGLILLSFWICGLMLMAS, YVNLFLFMIVFLLLMLIFTFS, FMFYLFFESSLIPTLFLILGW, IYLLFYTLLASLPLLIGIFYI, FLYLCMIFAFLVKMPMFLVHL, PVSGSMILAGVLLKLGGYGLL, FNYIWISISLIGGVLVSLICL, ALIAYSSVAHMGIVLSGLMTM, SYTLMIAHGLCSSGLFCLANI, SLSLWWFLLCSGNMAAPPTLNLL, LTMISLAFLSFFSAAYTLYLF, and YSGVYFFSSGTTREFLVLMLHWL.

Belongs to the complex I subunit 4 family.

The protein localises to the mitochondrion membrane. The enzyme catalyses a ubiquinone + NADH + 5 H(+)(in) = a ubiquinol + NAD(+) + 4 H(+)(out). Core subunit of the mitochondrial membrane respiratory chain NADH dehydrogenase (Complex I) that is believed to belong to the minimal assembly required for catalysis. Complex I functions in the transfer of electrons from NADH to the respiratory chain. The immediate electron acceptor for the enzyme is believed to be ubiquinone. The chain is NADH-ubiquinone oxidoreductase chain 4 from Aedes aegypti (Yellowfever mosquito).